The following is a 1092-amino-acid chain: Isoleucine--tRNA ligase (1092 aa).

The 'HIGH' region signature appears at 53 to 63 (PFANGLPHYGH). The short motif at 613-617 (KLSKR) is the 'KMSKS' region element. Lysine 616 provides a ligand contact to ATP.

Belongs to the class-I aminoacyl-tRNA synthetase family. IleS type 2 subfamily. Monomer. The cofactor is Zn(2+).

It localises to the cytoplasm. The enzyme catalyses tRNA(Ile) + L-isoleucine + ATP = L-isoleucyl-tRNA(Ile) + AMP + diphosphate. Its function is as follows. Catalyzes the attachment of isoleucine to tRNA(Ile). As IleRS can inadvertently accommodate and process structurally similar amino acids such as valine, to avoid such errors it has two additional distinct tRNA(Ile)-dependent editing activities. One activity is designated as 'pretransfer' editing and involves the hydrolysis of activated Val-AMP. The other activity is designated 'posttransfer' editing and involves deacylation of mischarged Val-tRNA(Ile). This Rickettsia africae (strain ESF-5) protein is Isoleucine--tRNA ligase.